A 313-amino-acid chain; its full sequence is Testis-expressed protein 264 (313 aa).

The Lumenal segment spans residues 1-6 (MSDLLL). The helical; Signal-anchor for type III membrane protein transmembrane segment at 7-31 (LGLIGGLTLLLLLTLLAFAGYSGLL) threads the bilayer. Residues 32–313 (AGVEVSAGSP…EPTAPEKGKE (282 aa)) lie on the Cytoplasmic side of the membrane. The segment at 193 to 313 (PEMKETEWKW…EPTAPEKGKE (121 aa)) is disordered. The span at 219-247 (DTMSDTSSVSLEVSPGSRETSAATLSPGA) shows a compositional bias: polar residues. Serine 239 and serine 244 each carry phosphoserine. Over residues 251–263 (GWDDGDTRSEHSY) the composition is skewed to basic and acidic residues. Low complexity predominate over residues 264 to 273 (SESGASGSSF). The LIR motif signature appears at 273–276 (FEEL).

Interacts (via the LIR motif) with ATG8 family proteins MAP1LC3A, MAP1LC3B, GABARAP and GABARAPL1. Interacts with VCP/p97; bridging VCP/p97 to covalent DNA-protein cross-links (DPCs). Interacts with TOP1 (when sumoylated).

The protein localises to the endoplasmic reticulum membrane. Its subcellular location is the cytoplasmic vesicle. It localises to the autophagosome. The protein resides in the cytoplasm. It is found in the cytosol. The protein localises to the nucleus. Its subcellular location is the chromosome. In terms of biological role, major reticulophagy (also called ER-phagy) receptor that acts independently of other candidate reticulophagy receptors to remodel subdomains of the endoplasmic reticulum into autophagosomes upon nutrient stress, which then fuse with lysosomes for endoplasmic reticulum turnover. The ATG8-containing isolation membrane (IM) cradles a tubular segment of TEX264-positive ER near a three-way junction, allowing the formation of a synapse of 2 juxtaposed membranes with trans interaction between the TEX264 and ATG8 proteins. Expansion of the IM would extend the capture of ER, possibly through a 'zipper-like' process involving continued trans TEX264-ATG8 interactions, until poorly understood mechanisms lead to the fission of relevant membranes and, ultimately, autophagosomal membrane closure. Also involved in the repair of covalent DNA-protein cross-links (DPCs) during DNA synthesis: acts by bridging VCP/p97 to covalent DNA-protein cross-links (DPCs) and initiating resolution of DPCs by SPRTN. The sequence is that of Testis-expressed protein 264 from Homo sapiens (Human).